A 317-amino-acid chain; its full sequence is ATP synthase gamma chain (317 aa).

The protein belongs to the ATPase gamma chain family. F-type ATPases have 2 components, CF(1) - the catalytic core - and CF(0) - the membrane proton channel. CF(1) has five subunits: alpha(3), beta(3), gamma(1), delta(1), epsilon(1). CF(0) has three main subunits: a, b and c.

It is found in the cellular thylakoid membrane. Its function is as follows. Produces ATP from ADP in the presence of a proton gradient across the membrane. The gamma chain is believed to be important in regulating ATPase activity and the flow of protons through the CF(0) complex. The protein is ATP synthase gamma chain of Acaryochloris marina (strain MBIC 11017).